The chain runs to 299 residues: Homoserine kinase (299 aa).

88–98 serves as a coordination point for ATP; sequence PLGRGLGSSAT.

It belongs to the GHMP kinase family. Homoserine kinase subfamily.

It is found in the cytoplasm. The enzyme catalyses L-homoserine + ATP = O-phospho-L-homoserine + ADP + H(+). It functions in the pathway amino-acid biosynthesis; L-threonine biosynthesis; L-threonine from L-aspartate: step 4/5. Functionally, catalyzes the ATP-dependent phosphorylation of L-homoserine to L-homoserine phosphate. The chain is Homoserine kinase from Gloeobacter violaceus (strain ATCC 29082 / PCC 7421).